A 1258-amino-acid polypeptide reads, in one-letter code: Cohesin subunit SA-1 (1258 aa).

The disordered stretch occupies residues 1 to 84 (MITSELPVLQ…HPQQNGEGEP (84 aa)). Residues 10 to 19 (QDSTNETTAH) are compositionally biased toward polar residues. Serine 24 is modified (phosphoserine). Over residues 53-62 (SPGEKSRIEA) the composition is skewed to basic and acidic residues. The region spanning 296–381 (FVHRYRDAIA…NRFKDRIVSM (86 aa)) is the SCD domain. Serine 756, serine 1062, and serine 1065 each carry phosphoserine. Disordered regions lie at residues 1055–1096 (GGED…SLDN) and 1129–1148 (MGDQ…DFLH). Low complexity predominate over residues 1062–1074 (SVNSGSSSSKTSS). Over residues 1076–1087 (RNKKGRPPLHKK) the composition is skewed to basic residues. Residue serine 1093 is modified to Phosphoserine. The segment covering 1137–1146 (ESEHGSEPDF) has biased composition (basic and acidic residues). Lysine 1161 is covalently cross-linked (Glycyl lysine isopeptide (Lys-Gly) (interchain with G-Cter in SUMO2)).

Belongs to the SCC3 family. In terms of assembly, cohesin complexes are composed of a heterodimer between a SMC1 protein (SMC1A or SMC1B) and SMC3, which are attached via their hinge domain, and RAD21 which link them at their heads, and one STAG protein (STAG1, STAG2 or STAG3). In cohesin complexes, STAG1 is mutually exclusive with STAG2 and STAG3. Interacts directly with RAD21 in cohesin complex. The cohesin complex interacts with the cohesin loading complex subunits NIPBL/Scc2 (via HEAT repeats) and MAU2/Scc4. NIPBL directly contacts all members of the complex, RAD21, SMC1A/B, SMC3 and STAG1. Post-translationally, phosphorylated by PLK1. The large dissociation of cohesin from chromosome arms during prophase is partly due to its phosphorylation.

It is found in the nucleus. The protein localises to the chromosome. It localises to the centromere. Component of cohesin complex, a complex required for the cohesion of sister chromatids after DNA replication. The cohesin complex apparently forms a large proteinaceous ring within which sister chromatids can be trapped. At anaphase, the complex is cleaved and dissociates from chromatin, allowing sister chromatids to segregate. The cohesin complex may also play a role in spindle pole assembly during mitosis. The chain is Cohesin subunit SA-1 (STAG1) from Homo sapiens (Human).